The primary structure comprises 101 residues: opdI (101 aa).

The helical transmembrane segment at 30–49 threads the bilayer; that stretch reads GGMGGALKIVFLGMMTYFIA. The segment at 56–101 is disordered; it reads SQHPPTDFNAPVQSVPQRAQRPSDTRLQGPVLLASNHPSGDSASPE. Polar residues-rich tracts occupy residues 66-81 and 91-101; these read PVQSVPQRAQRPSDTR and NHPSGDSASPE.

It localises to the membrane. Functionally, part of the gene cluster that mediates the biosynthesis of oxopyrrolidines, polyketide-amino acid hybrid compounds with feature structures of tetramic acid. Does not seem to play a role in oxopyrrolidines A and B biosynthesis. The polypeptide is opdI (Penicillium oxalicum (strain 114-2 / CGMCC 5302) (Penicillium decumbens)).